The chain runs to 759 residues: Glycerol-3-phosphate O-acyltransferase 1 (759 aa).

The Lumenal portion of the chain corresponds to 1-48; the sequence is MPAPKLTEKFASSKSTQKTTNYSSIEAKSVKTSADQAYIYQEPSATKK. Residues 49–69 form a helical membrane-spanning segment; that stretch reads ILYSIATWLLYNIFHCFFREI. Residues 70–434 are Cytoplasmic-facing; sequence RGRGSFKVPQ…AKVNFAKNLG (365 aa). Positions 414–419 match the HXXXXD motif motif; sequence HYNLPD. Residues 435–449 traverse the membrane as a helical segment; it reads LVFFRSIGLCILFSL. Position 450 (Ala-450) is a topological domain, lumenal. A helical transmembrane segment spans residues 451 to 465; that stretch reads MPGIIMFSPVFILAK. The Cytoplasmic portion of the chain corresponds to 466–493; that stretch reads RISQEKARTALSKSTVKIKANDVIATWK. The helical transmembrane segment at 494 to 514 threads the bilayer; the sequence is ILIGMGFAPLLYIFWSVLITY. Over 515–523 the chain is Lumenal; sequence YLRHKPWNK. Residues 524–544 form a helical membrane-spanning segment; that stretch reads IYVFSGSYISCVIVTYSALIV. Residues 545–759 lie on the Cytoplasmic side of the membrane; that stretch reads GDIGMDGFKS…EEEEGKEGDA (215 aa). Disordered stretches follow at residues 613-667, 684-705, and 729-759; these read EEDR…SLVN, RKSE…EFEV, and IGEN…EGDA. The segment covering 647 to 659 has biased composition (basic and acidic residues); sequence RDNHDAYEHHNQD. Over residues 688–702 the composition is skewed to low complexity; sequence SSLASTSVAPSSSSE. Residues 736–759 are compositionally biased toward acidic residues; sequence EEEEEEEEEEEEEEEEEEGKEGDA.

This sequence belongs to the GPAT/DAPAT family.

The protein localises to the endoplasmic reticulum membrane. It carries out the reaction sn-glycerol 3-phosphate + an acyl-CoA = a 1-acyl-sn-glycero-3-phosphate + CoA. The enzyme catalyses dihydroxyacetone phosphate + an acyl-CoA = a 1-acylglycerone 3-phosphate + CoA. The catalysed reaction is sn-glycerol 3-phosphate + hexadecanoyl-CoA = 1-hexadecanoyl-sn-glycero-3-phosphate + CoA. It catalyses the reaction (9Z)-hexadecenoyl-CoA + sn-glycerol 3-phosphate = 1-(9Z-hexadecenoyl)-sn-glycero-3-phosphate + CoA. It carries out the reaction sn-glycerol 3-phosphate + octadecanoyl-CoA = 1-octadecanoyl-sn-glycero-3-phosphate + CoA. The enzyme catalyses sn-glycerol 3-phosphate + (9Z)-octadecenoyl-CoA = 1-(9Z-octadecenoyl)-sn-glycero-3-phosphate + CoA. It functions in the pathway phospholipid metabolism; CDP-diacylglycerol biosynthesis; CDP-diacylglycerol from sn-glycerol 3-phosphate: step 1/3. Dual substrate-specific glycerol-3-phosphate/dihydroxyacetone phosphate sn-1 acyltransferase, catalyzing the first and committed reaction in the de novo synthesis of glycerophospholipids and triacylglycerols (TAGs). Prefers Gly-3-P over dihydroxyacetone phosphate and has a marked preference for 16-carbon fatty acyl chains. Transfers a fatty acid from fatty acyl-CoA to the sn-1 position of glycerol-3-phosphate to produce lysophosphatidic acid (LysoPA). These lipids not only are precursors of glycerolipids, but also are dynamic components of signal transduction systems that control cell physiology. SCT1 is the primary supplier of diacylglycerols (DAG), used mainly in TAG synthesis and phosphatidylcholine (PC) synthesis through the CDP-choline pathway. Regulates fatty acid desaturation, that is, the ratio of unsaturated versus saturated fatty acyl chains, by competing with the desaturase OLE1 for the common substrate C16:0-CoA. Sequesters C16:0-CoA into lipids, thereby shielding it from desaturation by OLE1. The sequence is that of Glycerol-3-phosphate O-acyltransferase 1 from Saccharomyces cerevisiae (strain ATCC 204508 / S288c) (Baker's yeast).